Reading from the N-terminus, the 66-residue chain is DNA-directed RNA polymerase subunit Rpo10 (66 aa).

Zn(2+)-binding residues include Cys7, Cys10, Cys44, and Cys45.

It belongs to the archaeal Rpo10/eukaryotic RPB10 RNA polymerase subunit family. In terms of assembly, part of the RNA polymerase complex. The cofactor is Zn(2+).

Its subcellular location is the cytoplasm. It catalyses the reaction RNA(n) + a ribonucleoside 5'-triphosphate = RNA(n+1) + diphosphate. Its function is as follows. DNA-dependent RNA polymerase (RNAP) catalyzes the transcription of DNA into RNA using the four ribonucleoside triphosphates as substrates. The chain is DNA-directed RNA polymerase subunit Rpo10 from Pyrobaculum islandicum (strain DSM 4184 / JCM 9189 / GEO3).